We begin with the raw amino-acid sequence, 340 residues long: tRNA N6-adenosine threonylcarbamoyltransferase (340 aa).

Fe cation-binding residues include histidine 115 and histidine 119. Residues 138 to 142, aspartate 171, glycine 184, aspartate 188, and asparagine 278 each bind substrate; that span reads VVSGG. Aspartate 306 is a binding site for Fe cation.

This sequence belongs to the KAE1 / TsaD family. Fe(2+) is required as a cofactor.

It is found in the cytoplasm. The enzyme catalyses L-threonylcarbamoyladenylate + adenosine(37) in tRNA = N(6)-L-threonylcarbamoyladenosine(37) in tRNA + AMP + H(+). Required for the formation of a threonylcarbamoyl group on adenosine at position 37 (t(6)A37) in tRNAs that read codons beginning with adenine. Is involved in the transfer of the threonylcarbamoyl moiety of threonylcarbamoyl-AMP (TC-AMP) to the N6 group of A37, together with TsaE and TsaB. TsaD likely plays a direct catalytic role in this reaction. This chain is tRNA N6-adenosine threonylcarbamoyltransferase, found in Clostridium botulinum (strain 657 / Type Ba4).